The chain runs to 439 residues: Histidinol dehydrogenase (439 aa).

NAD(+)-binding residues include Y132, Q194, and N217. Substrate contacts are provided by S244, Q266, and H269. Zn(2+) is bound by residues Q266 and H269. Catalysis depends on proton acceptor residues E335 and H336. Substrate-binding residues include H336, D369, E423, and H428. D369 contributes to the Zn(2+) binding site. H428 provides a ligand contact to Zn(2+).

This sequence belongs to the histidinol dehydrogenase family. Zn(2+) is required as a cofactor.

It carries out the reaction L-histidinol + 2 NAD(+) + H2O = L-histidine + 2 NADH + 3 H(+). The protein operates within amino-acid biosynthesis; L-histidine biosynthesis; L-histidine from 5-phospho-alpha-D-ribose 1-diphosphate: step 9/9. Functionally, catalyzes the sequential NAD-dependent oxidations of L-histidinol to L-histidinaldehyde and then to L-histidine. The chain is Histidinol dehydrogenase (his2) from Schizosaccharomyces pombe (strain 972 / ATCC 24843) (Fission yeast).